Consider the following 634-residue polypeptide: Threonine--tRNA ligase (634 aa).

In terms of domain architecture, TGS spans 1 to 61; the sequence is MINITLPDGS…DHDASLRIIT (61 aa). A catalytic region spans residues 243 to 534; sequence DHRRIGKAQD…LIEHHAGAFP (292 aa). Cys334, His385, and His511 together coordinate Zn(2+).

This sequence belongs to the class-II aminoacyl-tRNA synthetase family. As to quaternary structure, homodimer. Requires Zn(2+) as cofactor.

It localises to the cytoplasm. The enzyme catalyses tRNA(Thr) + L-threonine + ATP = L-threonyl-tRNA(Thr) + AMP + diphosphate + H(+). Its function is as follows. Catalyzes the attachment of threonine to tRNA(Thr) in a two-step reaction: L-threonine is first activated by ATP to form Thr-AMP and then transferred to the acceptor end of tRNA(Thr). Also edits incorrectly charged L-seryl-tRNA(Thr). This chain is Threonine--tRNA ligase, found in Xanthomonas euvesicatoria pv. vesicatoria (strain 85-10) (Xanthomonas campestris pv. vesicatoria).